The chain runs to 144 residues: Transcription antitermination protein NusB (144 aa).

This sequence belongs to the NusB family.

In terms of biological role, involved in transcription antitermination. Required for transcription of ribosomal RNA (rRNA) genes. Binds specifically to the boxA antiterminator sequence of the ribosomal RNA (rrn) operons. This is Transcription antitermination protein NusB from Pasteurella multocida (strain Pm70).